A 109-amino-acid chain; its full sequence is Aquaporin-2 (109 aa).

At 1 to 6 (SIAFSR) the chain is on the cytoplasmic side. A helical transmembrane segment spans residues 7 to 27 (AVLAEFLATLLFVFFGLGSAL). Over 28–35 (NWPQAMPS) the chain is Extracellular. A helical membrane pass occupies residues 36 to 54 (VLQIAMAFGLAIGTLVQAL). The Cytoplasmic segment spans residues 55–59 (GHVSG). Residues 60–69 (AHINPAVTVA) constitute an intramembrane region (discontinuously helical). The NPA 1 motif lies at 63-65 (NPA). Residues 70-80 (CLVGCHVSFLR) lie on the Cytoplasmic side of the membrane. A helical transmembrane segment spans residues 81-102 (AAFYVAAQLLGAVAGAALLHEI). Topologically, residues 103–109 (TPPDIRR) are extracellular.

Belongs to the MIP/aquaporin (TC 1.A.8) family. As to quaternary structure, homotetramer. Post-translationally, serine phosphorylation is necessary and sufficient for expression at the apical membrane. Endocytosis is not phosphorylation-dependent. In terms of processing, N-glycosylated.

The protein localises to the apical cell membrane. Its subcellular location is the basolateral cell membrane. The protein resides in the cell membrane. It is found in the cytoplasmic vesicle membrane. It localises to the golgi apparatus. The protein localises to the trans-Golgi network membrane. It catalyses the reaction H2O(in) = H2O(out). The enzyme catalyses glycerol(in) = glycerol(out). Functionally, forms a water-specific channel that provides the plasma membranes of renal collecting duct with high permeability to water, thereby permitting water to move in the direction of an osmotic gradient. Plays an essential role in renal water homeostasis. Could also be permeable to glycerol. The sequence is that of Aquaporin-2 from Equus caballus (Horse).